Here is a 1161-residue protein sequence, read N- to C-terminus: DNA-directed RNA polymerase subunit beta' (1161 aa).

4 residues coordinate Zn(2+): cysteine 60, cysteine 62, cysteine 75, and cysteine 78. Mg(2+) contacts are provided by aspartate 449, aspartate 451, and aspartate 453. Positions 790, 864, 871, and 874 each coordinate Zn(2+).

This sequence belongs to the RNA polymerase beta' chain family. As to quaternary structure, the RNAP catalytic core consists of 2 alpha, 1 beta, 1 beta' and 1 omega subunit. When a sigma factor is associated with the core the holoenzyme is formed, which can initiate transcription. Requires Mg(2+) as cofactor. The cofactor is Zn(2+).

The enzyme catalyses RNA(n) + a ribonucleoside 5'-triphosphate = RNA(n+1) + diphosphate. Its function is as follows. DNA-dependent RNA polymerase catalyzes the transcription of DNA into RNA using the four ribonucleoside triphosphates as substrates. This Clostridioides difficile (strain 630) (Peptoclostridium difficile) protein is DNA-directed RNA polymerase subunit beta'.